The chain runs to 65 residues: Double gene block protein 1 (65 aa).

Residues 1–41 (MDSQRTVELTNPRGRSKERGDSGGKQKNSMGRKIANDAISE) are disordered. A compositionally biased stretch (basic and acidic residues) spans 15 to 24 (RSKERGDSGG). The interval 17 to 43 (KERGDSGGKQKNSMGRKIANDAISESK) is RNA-binding.

Belongs to the carmovirus double gene block protein 1 family. In terms of assembly, homodimer.

In terms of biological role, cell-to-cell movement. Displays RNA-binding activity. The sequence is that of Double gene block protein 1 from Melon necrotic spot virus (MNSV).